The sequence spans 457 residues: ATP synthase subunit beta (457 aa).

147–154 (GGAGVGKT) contributes to the ATP binding site.

The protein belongs to the ATPase alpha/beta chains family. As to quaternary structure, F-type ATPases have 2 components, CF(1) - the catalytic core - and CF(0) - the membrane proton channel. CF(1) has five subunits: alpha(3), beta(3), gamma(1), delta(1), epsilon(1). CF(0) has three main subunits: a(1), b(2) and c(9-12). The alpha and beta chains form an alternating ring which encloses part of the gamma chain. CF(1) is attached to CF(0) by a central stalk formed by the gamma and epsilon chains, while a peripheral stalk is formed by the delta and b chains.

It is found in the cell inner membrane. It catalyses the reaction ATP + H2O + 4 H(+)(in) = ADP + phosphate + 5 H(+)(out). Produces ATP from ADP in the presence of a proton gradient across the membrane. The catalytic sites are hosted primarily by the beta subunits. The protein is ATP synthase subunit beta of Haemophilus influenzae (strain PittGG).